A 555-amino-acid polypeptide reads, in one-letter code: GPI-anchor transamidase component PIGS (555 aa).

At 2–18 (ATAGAAATDLEVVRGKR) the chain is on the cytoplasmic side. Residues arginine 15 and arginine 18 each contribute to the a cardiolipin site. A helical transmembrane segment spans residues 19 to 39 (AALFFAAVAILLGLPLWWKTT). Topologically, residues 40-517 (ETYRAPLPYS…LHLLYFPDDQ (478 aa)) are lumenal. N-linked (GlcNAc...) asparagine glycosylation is found at asparagine 267 and asparagine 370. The chain crosses the membrane as a helical span at residues 518-532 (KFAIYIPLFLPMAVP). Residues 533–555 (ILLSLVKIFLETHKSWKKPEKID) are Cytoplasmic-facing.

It belongs to the PIGS family. In terms of assembly, heteropentamer. Part of the GPI-anchor transamidase complex, consisting of PIGK, PIGT, PIGS, PIGU and GAA1.

It localises to the endoplasmic reticulum membrane. It functions in the pathway glycolipid biosynthesis; glycosylphosphatidylinositol-anchor biosynthesis. In terms of biological role, component of the glycosylphosphatidylinositol-anchor (GPI-anchor) transamidase (GPI-T) complex that catalyzes the formation of the linkage between a proprotein and a GPI-anchor and participates in GPI anchored protein biosynthesis. The sequence is that of GPI-anchor transamidase component PIGS from Rattus norvegicus (Rat).